A 462-amino-acid polypeptide reads, in one-letter code: Protein MOS2 (462 aa).

Residues Met-1–Lys-10 show a composition bias toward low complexity. The segment at Met-1 to Lys-32 is disordered. One can recognise a G-patch domain in the interval Val-156 to Asp-202. Residues Val-231–Ser-258 form the KOW 1 domain. Residues Asp-301–Glu-336 show a composition bias toward basic and acidic residues. The disordered stretch occupies residues Asp-301 to Lys-340. One can recognise a KOW 2 domain in the interval Leu-401 to Asp-428.

It belongs to the MOS2 family.

Its subcellular location is the nucleus. Required for innate and induced resistance to pathogens such as compatible and incompatible isolates of P.syringae and P.parasitica. The polypeptide is Protein MOS2 (MOS2) (Arabidopsis thaliana (Mouse-ear cress)).